A 251-amino-acid polypeptide reads, in one-letter code: 2,3-bisphosphoglycerate-dependent phosphoglycerate mutase (251 aa).

Substrate-binding positions include 13–20 (RHGESEWN), 26–27 (TG), arginine 65, 92–95 (ERHY), lysine 103, 119–120 (RR), and 186–187 (GN). The active-site Tele-phosphohistidine intermediate is histidine 14. Glutamate 92 acts as the Proton donor/acceptor in catalysis.

This sequence belongs to the phosphoglycerate mutase family. BPG-dependent PGAM subfamily.

It carries out the reaction (2R)-2-phosphoglycerate = (2R)-3-phosphoglycerate. It participates in carbohydrate degradation; glycolysis; pyruvate from D-glyceraldehyde 3-phosphate: step 3/5. Functionally, catalyzes the interconversion of 2-phosphoglycerate and 3-phosphoglycerate. This chain is 2,3-bisphosphoglycerate-dependent phosphoglycerate mutase, found in Rhodococcus opacus (strain B4).